Here is a 547-residue protein sequence, read N- to C-terminus: Chaperonin GroEL (547 aa).

ATP-binding positions include 30–33, K51, 87–91, G415, and D496; these read TLGP and DGTTT. Residues 527–547 form a disordered region; that stretch reads ENTPDMPAMPPGGMGGMGGMY. Gly residues predominate over residues 538–547; sequence GGMGGMGGMY.

The protein belongs to the chaperonin (HSP60) family. As to quaternary structure, forms a cylinder of 14 subunits composed of two heptameric rings stacked back-to-back. Interacts with the co-chaperonin GroES.

The protein resides in the cytoplasm. It carries out the reaction ATP + H2O + a folded polypeptide = ADP + phosphate + an unfolded polypeptide.. Its function is as follows. Together with its co-chaperonin GroES, plays an essential role in assisting protein folding. The GroEL-GroES system forms a nano-cage that allows encapsulation of the non-native substrate proteins and provides a physical environment optimized to promote and accelerate protein folding. In Chlorobium phaeovibrioides (strain DSM 265 / 1930) (Prosthecochloris vibrioformis (strain DSM 265)), this protein is Chaperonin GroEL.